The primary structure comprises 139 residues: Actin-depolymerizing factor 6 (139 aa).

The region spanning Ala5 to Leu139 is the ADF-H domain.

The protein belongs to the actin-binding proteins ADF family.

Actin-depolymerizing protein. Severs actin filaments (F-actin) and binds to actin monomers. The polypeptide is Actin-depolymerizing factor 6 (ADF6) (Oryza sativa subsp. japonica (Rice)).